The following is a 338-amino-acid chain: Aspartate carbamoyltransferase catalytic subunit (338 aa).

Carbamoyl phosphate contacts are provided by arginine 72 and threonine 73. Position 100 (lysine 100) interacts with L-aspartate. Residues arginine 122, histidine 152, and glutamine 155 each coordinate carbamoyl phosphate. Residues arginine 186 and arginine 243 each contribute to the L-aspartate site. Glycine 284 and proline 285 together coordinate carbamoyl phosphate.

Belongs to the aspartate/ornithine carbamoyltransferase superfamily. ATCase family. In terms of assembly, heterododecamer (2C3:3R2) of six catalytic PyrB chains organized as two trimers (C3), and six regulatory PyrI chains organized as three dimers (R2).

The enzyme catalyses carbamoyl phosphate + L-aspartate = N-carbamoyl-L-aspartate + phosphate + H(+). The protein operates within pyrimidine metabolism; UMP biosynthesis via de novo pathway; (S)-dihydroorotate from bicarbonate: step 2/3. In terms of biological role, catalyzes the condensation of carbamoyl phosphate and aspartate to form carbamoyl aspartate and inorganic phosphate, the committed step in the de novo pyrimidine nucleotide biosynthesis pathway. The sequence is that of Aspartate carbamoyltransferase catalytic subunit from Acinetobacter baumannii (strain AB307-0294).